Here is a 399-residue protein sequence, read N- to C-terminus: GDP-D-glucose phosphorylase 1 (399 aa).

Residue His237 is the Tele-GMP-histidine intermediate of the active site.

The protein belongs to the GDPGP1 family.

The protein localises to the cytoplasm. The enzyme catalyses GDP-alpha-D-glucose + phosphate = alpha-D-glucose 1-phosphate + GDP + H(+). Specific and highly efficient GDP-D-glucose phosphorylase regulating the levels of GDP-D-glucose in cells. The polypeptide is GDP-D-glucose phosphorylase 1 (gdpgp1) (Xenopus laevis (African clawed frog)).